A 130-amino-acid chain; its full sequence is Small ribosomal subunit protein uS11c (130 aa).

The protein belongs to the universal ribosomal protein uS11 family. As to quaternary structure, part of the 30S ribosomal subunit.

Its subcellular location is the plastid. It localises to the chloroplast. In Chlorokybus atmophyticus (Soil alga), this protein is Small ribosomal subunit protein uS11c.